A 187-amino-acid polypeptide reads, in one-letter code: Nucleoside-triphosphatase THEP1 (187 aa).

ATP-binding positions include 9–16 (GRPGVGKT) and 100–107 (LIAIDEIG).

It belongs to the THEP1 NTPase family.

It carries out the reaction a ribonucleoside 5'-triphosphate + H2O = a ribonucleoside 5'-diphosphate + phosphate + H(+). Its function is as follows. Has nucleotide phosphatase activity towards ATP, GTP, CTP, TTP and UTP. May hydrolyze nucleoside diphosphates with lower efficiency. This chain is Nucleoside-triphosphatase THEP1, found in Hyperthermus butylicus (strain DSM 5456 / JCM 9403 / PLM1-5).